The sequence spans 446 residues: Dual specificity mitogen-activated protein kinase kinase 2 (446 aa).

Positions 27–42 are enriched in low complexity; sequence SSGSSAGLGFQGQSQQ. The segment at 27 to 51 is disordered; sequence SSGSSAGLGFQGQSQQHSTVNSMQG. A Protein kinase domain is found at 149 to 414; that stretch reads LKDLGEIGRG…YKELLKHPFI (266 aa). Residues 155-163 and Lys178 each bind ATP; that span reads IGRGAYGSV. The Proton acceptor role is filled by Asp276. The residue at position 304 (Ser304) is a Phosphoserine; by RAF. Thr308 is modified (phosphothreonine; by RAF).

Belongs to the protein kinase superfamily. STE Ser/Thr protein kinase family. MAP kinase kinase subfamily. In terms of processing, MAPKK is itself dependent on Ser/Thr phosphorylation for activity catalyzed by MAP kinase kinase kinases. As to expression, expressed abundantly in the adult brain and muscle.

It carries out the reaction L-seryl-[protein] + ATP = O-phospho-L-seryl-[protein] + ADP + H(+). The enzyme catalyses L-threonyl-[protein] + ATP = O-phospho-L-threonyl-[protein] + ADP + H(+). The catalysed reaction is L-tyrosyl-[protein] + ATP = O-phospho-L-tyrosyl-[protein] + ADP + H(+). Functionally, catalyzes the concomitant phosphorylation of a threonine and a tyrosine residue in a Thr-Glu-Tyr sequence located in MAP kinases. This Xenopus laevis (African clawed frog) protein is Dual specificity mitogen-activated protein kinase kinase 2 (map2k2).